We begin with the raw amino-acid sequence, 145 residues long: Neuromedin-S (145 aa).

Residues 1-27 (MRSEKHLLPLPLLLAICCLGTLHLSSG) form the signal peptide. Propeptides lie at residues 28 to 89 (FPQS…HEIY) and 92 to 117 (FLFQFSRAKDPSLKIGESQIATAEYT). An Asparagine amide modification is found at Asn-136. A propeptide spanning residues 140-145 (VSINEH) is cleaved from the precursor.

It belongs to the NmU family. Expressed by the skin glands.

It is found in the secreted. Functionally, stimulates uterine smooth muscle contraction (EC(50)=1.6 nM). Synthetic peptide NmS-17 induces calcium mobilization in CHO cells transfected with either human FM-3/GPR66 (EC(50)=0.085 nM) or FM-4/TGR-1 (EC(50)=0.231 nM) NmU/NmS receptors. This is Neuromedin-S (nms) from Bombina maxima (Giant fire-bellied toad).